Here is a 268-residue protein sequence, read N- to C-terminus: Interleukin-1 beta (268 aa).

A propeptide spanning residues 1-115 is cleaved from the precursor; the sequence is MAAVPDTSDM…DNWDEGYVCD (115 aa).

It belongs to the IL-1 family. In terms of assembly, monomer. In its precursor form, weakly interacts with full-length MEFV; the mature cytokine does not interact at all. Interacts with integrins ITGAV:ITGBV and ITGA5:ITGB1; integrin-binding is required for IL1B signaling. Interacts with cargo receptor TMED10; the interaction is direct and is required for the secretion of IL1B mature form. Interacts with HSP90AB1; the interaction facilitates cargo translocation into the ERGIC. Interacts with HSP90B1; the interaction facilitates cargo translocation into the ERGIC.

It localises to the cytoplasm. Its subcellular location is the cytosol. The protein localises to the secreted. The protein resides in the lysosome. It is found in the extracellular exosome. In terms of biological role, potent pro-inflammatory cytokine. Initially discovered as the major endogenous pyrogen, induces prostaglandin synthesis, neutrophil influx and activation, T-cell activation and cytokine production, B-cell activation and antibody production, and fibroblast proliferation and collagen production. Promotes Th17 differentiation of T-cells. Synergizes with IL12/interleukin-12 to induce IFNG synthesis from T-helper 1 (Th1) cells. Plays a role in angiogenesis by inducing VEGF production synergistically with TNF and IL6. Involved in transduction of inflammation downstream of pyroptosis: its mature form is specifically released in the extracellular milieu by passing through the gasdermin-D (GSDMD) pore. In Equus caballus (Horse), this protein is Interleukin-1 beta (IL1B).